A 526-amino-acid chain; its full sequence is Peptide chain release factor 3 (526 aa).

A tr-type G domain is found at 9–277 (DRRRTFAIVS…TFVDHAPAPL (269 aa)). Residues 18–25 (SHPDAGKT), 86–90 (DTPGH), and 140–143 (NKLD) contribute to the GTP site.

This sequence belongs to the TRAFAC class translation factor GTPase superfamily. Classic translation factor GTPase family. PrfC subfamily.

It is found in the cytoplasm. Functionally, increases the formation of ribosomal termination complexes and stimulates activities of RF-1 and RF-2. It binds guanine nucleotides and has strong preference for UGA stop codons. It may interact directly with the ribosome. The stimulation of RF-1 and RF-2 is significantly reduced by GTP and GDP, but not by GMP. This chain is Peptide chain release factor 3, found in Geobacter sulfurreducens (strain ATCC 51573 / DSM 12127 / PCA).